A 513-amino-acid chain; its full sequence is Na(+)/H(+) antiporter NhaB (513 aa).

12 helical membrane passes run 23–43 (LALI…PFVA), 52–72 (IFTL…LLAI), 97–117 (LLLM…LFIF), 120–140 (LLLS…AAAF), 144–164 (FLDA…FYGI), 202–222 (LMMH…VGEP), 238–258 (FFLR…LTCL), 303–323 (AIIG…VGLI), 348–368 (TESL…AVII), 391–411 (LFYI…VGTI), 447–467 (ATPN…APLI), and 475–495 (VWMA…CVEF).

It belongs to the NhaB Na(+)/H(+) (TC 2.A.34) antiporter family.

Its subcellular location is the cell inner membrane. The enzyme catalyses 2 Na(+)(in) + 3 H(+)(out) = 2 Na(+)(out) + 3 H(+)(in). Its function is as follows. Na(+)/H(+) antiporter that extrudes sodium in exchange for external protons. This chain is Na(+)/H(+) antiporter NhaB, found in Shigella sonnei (strain Ss046).